A 302-amino-acid chain; its full sequence is tRNA dimethylallyltransferase (302 aa).

12–19 is an ATP binding site; sequence GPTASGKS. Substrate is bound at residue 14–19; sequence TASGKS. Positions 37–40 are interaction with substrate tRNA; that stretch reads DSMQ.

The protein belongs to the IPP transferase family. In terms of assembly, monomer. Mg(2+) is required as a cofactor.

The enzyme catalyses adenosine(37) in tRNA + dimethylallyl diphosphate = N(6)-dimethylallyladenosine(37) in tRNA + diphosphate. Its function is as follows. Catalyzes the transfer of a dimethylallyl group onto the adenine at position 37 in tRNAs that read codons beginning with uridine, leading to the formation of N6-(dimethylallyl)adenosine (i(6)A). The chain is tRNA dimethylallyltransferase from Corynebacterium diphtheriae (strain ATCC 700971 / NCTC 13129 / Biotype gravis).